The sequence spans 427 residues: MGYEKSIEAMKIAENLMPGGVNSPVRAFKSVDTPAIFMDHAKGSRIYDIDGNEYIDYVLSWGPLILGHKNEQVIKKLHEAVNRGTSFGASTLEENKLAELVIERVPSIEKVRMVSSGTEATLAALRLARGYTGRNKIIKFEGCYHGHSDSLLIKAGSGVATLGLPDSPGVPEGTAKNTITVPYNDLEAIKIAFENYGDDIAGIIVEPVAGNMGVVPPKDGFLQGLREITNDYGALLIFDEVMTGFRVGYNCAQGYFGVTPDLTCLGKVIGGGLPVGAFGGRKEIMDKVAPVGNIYQAGTLSGNPLAMTSGYETLSQLTPESYEYFQELGDILEEGLKKVFSKHNVPITINRAGSMIGYFLNEGPVTNFEEANKSNLELFSQMYREMAKEGVFLPPSQFEGTFLSTAHSKEDIEKTIQAFDTALSRIV.

Lysine 267 is subject to N6-(pyridoxal phosphate)lysine.

The protein belongs to the class-III pyridoxal-phosphate-dependent aminotransferase family. HemL subfamily. In terms of assembly, homodimer. It depends on pyridoxal 5'-phosphate as a cofactor.

It is found in the cytoplasm. It catalyses the reaction (S)-4-amino-5-oxopentanoate = 5-aminolevulinate. Its pathway is porphyrin-containing compound metabolism; protoporphyrin-IX biosynthesis; 5-aminolevulinate from L-glutamyl-tRNA(Glu): step 2/2. The polypeptide is Glutamate-1-semialdehyde 2,1-aminomutase 2 (Staphylococcus haemolyticus (strain JCSC1435)).